The primary structure comprises 222 residues: Deoxyribose-phosphate aldolase (222 aa).

Asp91 serves as the catalytic Proton donor/acceptor. The active-site Schiff-base intermediate with acetaldehyde is Lys153. Lys182 serves as the catalytic Proton donor/acceptor.

This sequence belongs to the DeoC/FbaB aldolase family. DeoC type 1 subfamily.

The protein localises to the cytoplasm. The catalysed reaction is 2-deoxy-D-ribose 5-phosphate = D-glyceraldehyde 3-phosphate + acetaldehyde. It functions in the pathway carbohydrate degradation; 2-deoxy-D-ribose 1-phosphate degradation; D-glyceraldehyde 3-phosphate and acetaldehyde from 2-deoxy-alpha-D-ribose 1-phosphate: step 2/2. Catalyzes a reversible aldol reaction between acetaldehyde and D-glyceraldehyde 3-phosphate to generate 2-deoxy-D-ribose 5-phosphate. This chain is Deoxyribose-phosphate aldolase, found in Mycoplasma capricolum subsp. capricolum (strain California kid / ATCC 27343 / NCTC 10154).